A 1085-amino-acid chain; its full sequence is Protein IFH1 (1085 aa).

6 disordered regions span residues 1–251 (MAGK…QQAL), 283–302 (KNKE…VMLG), 457–493 (SKLK…TSNV), 507–622 (DDEN…DSSV), 676–700 (VDDE…IGSK), and 747–774 (QLRE…GDEL). 2 stretches are compositionally biased toward polar residues: residues 9–18 (KSTINHSTHS) and 39–48 (RQSPPTLSTT). The span at 54–66 (SLIYSSESSLSDV) shows a compositional bias: low complexity. Residues 76–85 (NPHKIKRKAK) show a composition bias toward basic residues. Positions 120 to 165 (DGEESENEEEESEEEEEDDDEDDDDDDDDGSDSDSDSETSSDDENI) are enriched in acidic residues. Positions 184-197 (AMNTNSNTLYSSRE) are enriched in polar residues. Serine 208 carries the post-translational modification Phosphoserine. Residues 209-239 (PKKENEEEQKEEKEKEKEEQQKQQESNKKEV) are compositionally biased toward basic and acidic residues. Residues 241-251 (GSGTTTTQQAL) show a composition bias toward polar residues. Over residues 283-297 (KNKENNGNEEDKLDS) the composition is skewed to basic and acidic residues. The segment covering 474–483 (QRRKLYKKTQ) has biased composition (basic residues). The segment covering 484–493 (KPSTRTTSNV) has biased composition (polar residues). The segment covering 513–524 (HKSKKGRHKSGK) has biased composition (basic residues). Over residues 546–557 (STHSTVLNSGKY) the composition is skewed to polar residues. A compositionally biased stretch (basic and acidic residues) spans 584-599 (ETSHDADTDEELRALD). 2 stretches are compositionally biased toward acidic residues: residues 607-620 (TELD…DDDS) and 676-686 (VDDESTDEDDN). Positions 747-764 (QLREQHQRAQTPDVKREG) are enriched in basic and acidic residues. Serine 1041 carries the post-translational modification Phosphoserine.

Belongs to the IFH1 family.

Its subcellular location is the nucleus. Its function is as follows. Transcriptional coactivator that together with FHL1 regulates the expression of rRNA and ribosomal protein genes. Its activity is negatively regulated by environmental stress. This Saccharomyces cerevisiae (strain ATCC 204508 / S288c) (Baker's yeast) protein is Protein IFH1 (IFH1).